The chain runs to 301 residues: 3-methyl-2-oxobutanoate hydroxymethyltransferase (301 aa).

Polar residues predominate over residues 1–12 (MAPSNLPESTTP). Residues 1–24 (MAPSNLPESTTPAEVPAPYGTGPA) form a disordered region. Residues Asp82 and Asp121 each coordinate Mg(2+). 3-methyl-2-oxobutanoate-binding positions include 82–83 (DS), Asp121, and Lys151. Glu153 lines the Mg(2+) pocket. Catalysis depends on Glu219, which acts as the Proton acceptor.

Belongs to the PanB family. Homodecamer; pentamer of dimers. It depends on Mg(2+) as a cofactor.

The protein localises to the cytoplasm. It catalyses the reaction 3-methyl-2-oxobutanoate + (6R)-5,10-methylene-5,6,7,8-tetrahydrofolate + H2O = 2-dehydropantoate + (6S)-5,6,7,8-tetrahydrofolate. It participates in cofactor biosynthesis; (R)-pantothenate biosynthesis; (R)-pantoate from 3-methyl-2-oxobutanoate: step 1/2. Catalyzes the reversible reaction in which hydroxymethyl group from 5,10-methylenetetrahydrofolate is transferred onto alpha-ketoisovalerate to form ketopantoate. The protein is 3-methyl-2-oxobutanoate hydroxymethyltransferase of Paenarthrobacter aurescens (strain TC1).